The sequence spans 1168 residues: DNA-directed RNA polymerase subunit beta (1168 aa).

Belongs to the RNA polymerase beta chain family. The RNAP catalytic core consists of 2 alpha, 1 beta, 1 beta' and 1 omega subunit. When a sigma factor is associated with the core the holoenzyme is formed, which can initiate transcription.

The enzyme catalyses RNA(n) + a ribonucleoside 5'-triphosphate = RNA(n+1) + diphosphate. In terms of biological role, DNA-dependent RNA polymerase catalyzes the transcription of DNA into RNA using the four ribonucleoside triphosphates as substrates. The protein is DNA-directed RNA polymerase subunit beta of Rhodococcus jostii (strain RHA1).